The primary structure comprises 183 residues: Troponin I, fast skeletal muscle (183 aa).

Serine 2 carries the N-acetylserine modification. An involved in binding TNC region spans residues 2–48 (SDEEKKRRAATARRQHLKSAMLQLAVTEIEKEAAAKEVEKQNYLAEH). The segment at 97–117 (SQKLFDLRGKFKRPPLRRVRM) is involved in binding TNC and actin.

The protein belongs to the troponin I family. As to quaternary structure, binds to actin and tropomyosin. In terms of processing, the N-terminus is blocked.

Functionally, troponin I is the inhibitory subunit of troponin, the thin filament regulatory complex which confers calcium-sensitivity to striated muscle actomyosin ATPase activity. This Gallus gallus (Chicken) protein is Troponin I, fast skeletal muscle (TNNI2).